Here is a 77-residue protein sequence, read N- to C-terminus: Large ribosomal subunit protein bL28 (77 aa).

The protein belongs to the bacterial ribosomal protein bL28 family.

This Acidovorax ebreus (strain TPSY) (Diaphorobacter sp. (strain TPSY)) protein is Large ribosomal subunit protein bL28.